Here is a 147-residue protein sequence, read N- to C-terminus: Small ribosomal subunit protein eS19 (147 aa).

It belongs to the eukaryotic ribosomal protein eS19 family. In terms of assembly, component of the small ribosomal subunit.

It localises to the cytoplasm. The protein localises to the nucleus. Functionally, component of the small ribosomal subunit. The ribosome is a large ribonucleoprotein complex responsible for the synthesis of proteins in the cell. Required for pre-rRNA processing and maturation of 40S ribosomal subunits. The protein is Small ribosomal subunit protein eS19 (rps19) of Ictalurus punctatus (Channel catfish).